Reading from the N-terminus, the 461-residue chain is tRNA modification GTPase MnmE (461 aa).

Positions 32, 89, and 128 each coordinate (6S)-5-formyl-5,6,7,8-tetrahydrofolate. The TrmE-type G domain maps to 224–387 (GHALSIVGKP…LSQKISAFFP (164 aa)). Residue Asn234 participates in K(+) binding. GTP contacts are provided by residues 234 to 239 (NAGKSS), 253 to 259 (SDIKGTT), and 278 to 281 (DTAG). Mg(2+) is bound at residue Ser238. K(+) is bound by residues Ser253, Ile255, and Thr258. Position 259 (Thr259) interacts with Mg(2+). Lys461 contacts (6S)-5-formyl-5,6,7,8-tetrahydrofolate.

It belongs to the TRAFAC class TrmE-Era-EngA-EngB-Septin-like GTPase superfamily. TrmE GTPase family. Homodimer. Heterotetramer of two MnmE and two MnmG subunits. It depends on K(+) as a cofactor.

It localises to the cytoplasm. Exhibits a very high intrinsic GTPase hydrolysis rate. Involved in the addition of a carboxymethylaminomethyl (cmnm) group at the wobble position (U34) of certain tRNAs, forming tRNA-cmnm(5)s(2)U34. This Helicobacter pylori (strain ATCC 700392 / 26695) (Campylobacter pylori) protein is tRNA modification GTPase MnmE.